The following is a 400-amino-acid chain: tRNA-specific adenosine deaminase TAD3 (400 aa).

The 136-residue stretch at 250–385 (SQWHPLRHAS…KSLNHHYAVF (136 aa)) folds into the CMP/dCMP-type deaminase domain. Residue histidine 257 participates in Zn(2+) binding. The segment at 273-320 (LFPNPSKIFDQDHVPPSNTDSPAKKQKTSSQSPDVQNDSREETVRDPS) is disordered. Residues 309–320 (NDSREETVRDPS) are compositionally biased toward basic and acidic residues. Positions 339 and 342 each coordinate Zn(2+).

This sequence belongs to the cytidine and deoxycytidylate deaminase family. ADAT3 subfamily. Interacts with TAD2.

The protein localises to the nucleus. The protein resides in the cytoplasm. The catalysed reaction is adenosine(34) in tRNA + H2O + H(+) = inosine(34) in tRNA + NH4(+). Functionally, involved in RNA editing. Catalyzes the specific deamination of adenosine-34 in several cytosolic tRNA species. Generates inosine at the wobble position of the anticodon loop. This chain is tRNA-specific adenosine deaminase TAD3, found in Arabidopsis thaliana (Mouse-ear cress).